A 343-amino-acid polypeptide reads, in one-letter code: Chlorophyll(ide) b reductase NOL, chloroplastic (343 aa).

Residues 1–54 constitute a chloroplast transit peptide; it reads MAATAAYLPLRAQAQVGLAPLRPSGSAAAGARLPGRTARRRLAARGGPEAAGIR. 78–102 is a binding site for NAD(+); it reads ITGSTKGIGYALAKEFLKAGDNVVI. The active-site Proton acceptor is the Y228.

This sequence belongs to the short-chain dehydrogenases/reductases (SDR) family. Interacts with NCY1 to form a complex that acts as a chlorophyll b reductase. In terms of tissue distribution, expressed in leaves and stems. Also detected in non-photosynthetic tissues such as roots.

It localises to the plastid. It is found in the chloroplast thylakoid membrane. It catalyses the reaction 7(1)-hydroxychlorophyllide a + NAD(+) = chlorophyllide b + NADH + H(+). The enzyme catalyses 7(1)-hydroxychlorophyllide a + NADP(+) = chlorophyllide b + NADPH + H(+). In terms of biological role, required for chlorophyll b degradation. The chain is Chlorophyll(ide) b reductase NOL, chloroplastic (NOL) from Oryza sativa subsp. japonica (Rice).